Reading from the N-terminus, the 480-residue chain is Major capsid protein (480 aa).

The protein resides in the virion. Functionally, major protein of the capsid. This Trichoplusia ni ascovirus 2c (TnAV-2c) protein is Major capsid protein (MCP-1).